A 211-amino-acid polypeptide reads, in one-letter code: Riboflavin kinase (211 aa).

The H-T-H motif-like stretch occupies residues 1-85 (MKKILMLIEL…CDKISNALSK (85 aa)). Positions 86–211 (GVIVGEVVSG…GDRVRLEVIQ (126 aa)) are riboflavin kinase. 95-100 (GLGEGA) contacts CDP. Positions 122 and 124 each coordinate Mg(2+). Residues threonine 178 and glutamate 186 each contribute to the FMN site. 191–194 (VNLR) serves as a coordination point for CDP.

Belongs to the archaeal riboflavin kinase family. Mg(2+) serves as cofactor.

It catalyses the reaction riboflavin + CTP = CDP + FMN + H(+). The protein operates within cofactor biosynthesis; FMN biosynthesis; FMN from riboflavin (CTP route): step 1/1. Functionally, catalyzes the CTP-dependent phosphorylation of riboflavin (vitamin B2) to form flavin mononucleotide (FMN). The protein is Riboflavin kinase (ribK) of Thermococcus kodakarensis (strain ATCC BAA-918 / JCM 12380 / KOD1) (Pyrococcus kodakaraensis (strain KOD1)).